Consider the following 876-residue polypeptide: Leucine--tRNA ligase (876 aa).

Positions 43–53 match the 'HIGH' region motif; that stretch reads PYPSGRIHMGH. A 'KMSKS' region motif is present at residues 632-636; it reads KMSKS. K635 is a binding site for ATP.

This sequence belongs to the class-I aminoacyl-tRNA synthetase family.

The protein localises to the cytoplasm. The catalysed reaction is tRNA(Leu) + L-leucine + ATP = L-leucyl-tRNA(Leu) + AMP + diphosphate. In Agrobacterium fabrum (strain C58 / ATCC 33970) (Agrobacterium tumefaciens (strain C58)), this protein is Leucine--tRNA ligase.